We begin with the raw amino-acid sequence, 471 residues long: Adenosylhomocysteinase (471 aa).

Residues T60, D135, and E196 each coordinate substrate. NAD(+) is bound at residue 197 to 199; sequence TTT. Residues K226 and D230 each coordinate substrate. Residues N231, 260–265, E283, N318, 339–341, and N387 each bind NAD(+); these read GYGDVG and IGH.

This sequence belongs to the adenosylhomocysteinase family. NAD(+) serves as cofactor.

The protein localises to the cytoplasm. The enzyme catalyses S-adenosyl-L-homocysteine + H2O = L-homocysteine + adenosine. It functions in the pathway amino-acid biosynthesis; L-homocysteine biosynthesis; L-homocysteine from S-adenosyl-L-homocysteine: step 1/1. Functionally, may play a key role in the regulation of the intracellular concentration of adenosylhomocysteine. This chain is Adenosylhomocysteinase, found in Pelodictyon phaeoclathratiforme (strain DSM 5477 / BU-1).